The sequence spans 111 residues: ATP-dependent Clp protease adapter protein ClpS (111 aa).

Belongs to the ClpS family. Binds to the N-terminal domain of the chaperone ClpA.

Functionally, involved in the modulation of the specificity of the ClpAP-mediated ATP-dependent protein degradation. The protein is ATP-dependent Clp protease adapter protein ClpS of Legionella pneumophila (strain Corby).